The chain runs to 47 residues: Short transmembrane mitochondrial protein 1 (47 aa).

A helical membrane pass occupies residues 7 to 23 (GFTLGNVVGMYLAQNYD).

The protein belongs to the STMP1 family. As to quaternary structure, interacts with components of the ubiquinol-cytochrome c oxidoreductase (cytochrome b-c1 complex, complex III, CIII), such as UQCRC1/QCR1, UQCRC2/QCR2 and UQCR10/QCR9. Interacts with components of the cytochrome c oxidase (mitochondrial respiratory chain complex IV) complex, such as MT-CO2. As to expression, expressed in monocytes and dendritic cells.

It is found in the mitochondrion inner membrane. Its subcellular location is the mitochondrion outer membrane. The protein localises to the mitochondrion intermembrane space. Its function is as follows. Microprotein involved in mitochondrial respiratory chain complex III (ubiquinol-cytochrome c oxidoreductase) and complex IV (mitochondrial cytochrome c oxidase complex) assembly. Required for the formation of mitochondrial supercomplexes (SCs). Also required for the activation of the NLRP3 inflammasome. In Homo sapiens (Human), this protein is Short transmembrane mitochondrial protein 1.